Consider the following 365-residue polypeptide: tRNA-specific 2-thiouridylase MnmA (365 aa).

ATP is bound by residues Ala14–Ser21 and Leu40. The active-site Nucleophile is the Cys108. A disulfide bridge links Cys108 with Cys204. Gly132 contacts ATP. Positions Lys154–Gln156 are interaction with tRNA. Cys204 functions as the Cysteine persulfide intermediate in the catalytic mechanism.

This sequence belongs to the MnmA/TRMU family.

The protein resides in the cytoplasm. It catalyses the reaction S-sulfanyl-L-cysteinyl-[protein] + uridine(34) in tRNA + AH2 + ATP = 2-thiouridine(34) in tRNA + L-cysteinyl-[protein] + A + AMP + diphosphate + H(+). Its function is as follows. Catalyzes the 2-thiolation of uridine at the wobble position (U34) of tRNA, leading to the formation of s(2)U34. The chain is tRNA-specific 2-thiouridylase MnmA from Rickettsia felis (strain ATCC VR-1525 / URRWXCal2) (Rickettsia azadi).